A 340-amino-acid chain; its full sequence is GTP 3',8-cyclase (340 aa).

Residues 8–227 (KLGRPIRDLR…SMIQEEFDIE (220 aa)) enclose the Radical SAM core domain. Position 17 (Arg-17) interacts with GTP. Residues Cys-24 and Cys-28 each coordinate [4Fe-4S] cluster. Tyr-30 contacts S-adenosyl-L-methionine. Cys-31 contacts [4Fe-4S] cluster. Arg-71 is a binding site for GTP. An S-adenosyl-L-methionine-binding site is contributed by Gly-75. Position 102 (Thr-102) interacts with GTP. S-adenosyl-L-methionine is bound at residue Ser-126. Residue Lys-163 coordinates GTP. S-adenosyl-L-methionine is bound at residue Met-197. [4Fe-4S] cluster is bound by residues Cys-261 and Cys-264. 266–268 (RAR) is a GTP binding site. Position 278 (Cys-278) interacts with [4Fe-4S] cluster.

Belongs to the radical SAM superfamily. MoaA family. Monomer and homodimer. [4Fe-4S] cluster is required as a cofactor.

It carries out the reaction GTP + AH2 + S-adenosyl-L-methionine = (8S)-3',8-cyclo-7,8-dihydroguanosine 5'-triphosphate + 5'-deoxyadenosine + L-methionine + A + H(+). The protein operates within cofactor biosynthesis; molybdopterin biosynthesis. Functionally, catalyzes the cyclization of GTP to (8S)-3',8-cyclo-7,8-dihydroguanosine 5'-triphosphate. In Staphylococcus carnosus (strain TM300), this protein is GTP 3',8-cyclase.